A 128-amino-acid chain; its full sequence is DNA-directed RNA polymerase subunit omega (128 aa).

Residues 87–106 (ARSSQAAPKSAPGQEIGKSF) are disordered.

This sequence belongs to the RNA polymerase subunit omega family. In terms of assembly, the RNAP catalytic core consists of 2 alpha, 1 beta, 1 beta' and 1 omega subunit. When a sigma factor is associated with the core the holoenzyme is formed, which can initiate transcription.

It catalyses the reaction RNA(n) + a ribonucleoside 5'-triphosphate = RNA(n+1) + diphosphate. Its function is as follows. Promotes RNA polymerase assembly. Latches the N- and C-terminal regions of the beta' subunit thereby facilitating its interaction with the beta and alpha subunits. This Anaplasma marginale (strain Florida) protein is DNA-directed RNA polymerase subunit omega.